A 610-amino-acid polypeptide reads, in one-letter code: Putative protein tag-250 (610 aa).

2 consecutive Tudor domains span residues 149 to 260 (VALK…LLPP) and 386 to 506 (MPMS…KIGG).

This chain is Putative protein tag-250 (tag-250), found in Caenorhabditis elegans.